A 212-amino-acid polypeptide reads, in one-letter code: Endothelin-1 (212 aa).

The signal sequence occupies residues 1-17 (MDYLLMIFSLLFVACQG). Positions 18–50 (APETAVLGAELSAVGENGGEKPTPSPPWRLRRS) are excised as a propeptide. 2 disulfides stabilise this stretch: Cys53/Cys67 and Cys55/Cys63. A propeptide spanning residues 74–212 (VNTPEHVVPY…RYVTHNRAHW (139 aa)) is cleaved from the precursor. Residues 109–123 (CQCASQKDKKCWNFC) are endothelin-like. Composition is skewed to basic and acidic residues over residues 168-181 (RSSE…RSET) and 189-205 (SFHD…ERYV). The tract at residues 168–212 (RSSEEHLRQTRSETMRNSVKSSFHDPKLKGKPSRERYVTHNRAHW) is disordered.

It belongs to the endothelin/sarafotoxin family. Expressed in lung, placental stem villi vessels and in cultured placental vascular smooth muscle cells.

It is found in the secreted. Its function is as follows. Endothelins are endothelium-derived vasoconstrictor peptides. Probable ligand for G-protein coupled receptors EDNRA and EDNRB which activates PTK2B, BCAR1, BCAR3 and, GTPases RAP1 and RHOA cascade in glomerular mesangial cells. Also binds the DEAR/FBXW7-AS1 receptor. Promotes mesenteric arterial wall remodeling via activation of ROCK signaling and subsequent colocalization of NFATC3 with F-actin filaments. NFATC3 then translocates to the nucleus where it subsequently promotes the transcription of the smooth muscle hypertrophy and differentiation marker ACTA2. The sequence is that of Endothelin-1 (EDN1) from Homo sapiens (Human).